A 678-amino-acid chain; its full sequence is DNA ligase (678 aa).

NAD(+) is bound by residues Asp-47–Asp-51, Ser-96–Leu-97, and Glu-122. The N6-AMP-lysine intermediate role is filled by Lys-124. The NAD(+) site is built by Arg-145, Glu-182, Lys-300, and Lys-324. Zn(2+) is bound by residues Cys-418, Cys-421, Cys-436, and Cys-442. The BRCT domain occupies Ala-602–Leu-678.

Belongs to the NAD-dependent DNA ligase family. LigA subfamily. The cofactor is Mg(2+). Requires Mn(2+) as cofactor.

It catalyses the reaction NAD(+) + (deoxyribonucleotide)n-3'-hydroxyl + 5'-phospho-(deoxyribonucleotide)m = (deoxyribonucleotide)n+m + AMP + beta-nicotinamide D-nucleotide.. Functionally, DNA ligase that catalyzes the formation of phosphodiester linkages between 5'-phosphoryl and 3'-hydroxyl groups in double-stranded DNA using NAD as a coenzyme and as the energy source for the reaction. It is essential for DNA replication and repair of damaged DNA. This chain is DNA ligase, found in Francisella tularensis subsp. holarctica (strain LVS).